The chain runs to 320 residues: Ferrochelatase (320 aa).

H194 and E275 together coordinate Fe cation.

The protein belongs to the ferrochelatase family. Monomer.

The protein localises to the cytoplasm. The catalysed reaction is heme b + 2 H(+) = protoporphyrin IX + Fe(2+). It functions in the pathway porphyrin-containing compound metabolism; protoheme biosynthesis; protoheme from protoporphyrin-IX: step 1/1. Functionally, catalyzes the ferrous insertion into protoporphyrin IX. This Shigella flexneri serotype 5b (strain 8401) protein is Ferrochelatase.